A 142-amino-acid polypeptide reads, in one-letter code: Large ribosomal subunit protein uL13 (142 aa).

Belongs to the universal ribosomal protein uL13 family. As to quaternary structure, part of the 50S ribosomal subunit.

In terms of biological role, this protein is one of the early assembly proteins of the 50S ribosomal subunit, although it is not seen to bind rRNA by itself. It is important during the early stages of 50S assembly. The protein is Large ribosomal subunit protein uL13 of Chromohalobacter salexigens (strain ATCC BAA-138 / DSM 3043 / CIP 106854 / NCIMB 13768 / 1H11).